The sequence spans 270 residues: 3-methyl-2-oxobutanoate hydroxymethyltransferase (270 aa).

Mg(2+)-binding residues include aspartate 41 and aspartate 80. Residues 41-42 (DS), aspartate 80, and lysine 109 each bind 3-methyl-2-oxobutanoate. Glutamate 111 provides a ligand contact to Mg(2+). Glutamate 178 acts as the Proton acceptor in catalysis.

Belongs to the PanB family. As to quaternary structure, homodecamer; pentamer of dimers. It depends on Mg(2+) as a cofactor.

The protein resides in the cytoplasm. The enzyme catalyses 3-methyl-2-oxobutanoate + (6R)-5,10-methylene-5,6,7,8-tetrahydrofolate + H2O = 2-dehydropantoate + (6S)-5,6,7,8-tetrahydrofolate. It functions in the pathway cofactor biosynthesis; (R)-pantothenate biosynthesis; (R)-pantoate from 3-methyl-2-oxobutanoate: step 1/2. In terms of biological role, catalyzes the reversible reaction in which hydroxymethyl group from 5,10-methylenetetrahydrofolate is transferred onto alpha-ketoisovalerate to form ketopantoate. In Thermotoga neapolitana (strain ATCC 49049 / DSM 4359 / NBRC 107923 / NS-E), this protein is 3-methyl-2-oxobutanoate hydroxymethyltransferase.